The chain runs to 340 residues: L-threonine 3-dehydrogenase (340 aa).

Residue C38 coordinates Zn(2+). Active-site charge relay system residues include T40 and H43. The Zn(2+) site is built by H63, E64, C93, C96, C99, and C107. NAD(+) is bound by residues I175, D195, R200, 262-264 (LGI), and 286-287 (IY).

This sequence belongs to the zinc-containing alcohol dehydrogenase family. In terms of assembly, homotetramer. Zn(2+) is required as a cofactor.

It is found in the cytoplasm. It catalyses the reaction L-threonine + NAD(+) = (2S)-2-amino-3-oxobutanoate + NADH + H(+). The protein operates within amino-acid degradation; L-threonine degradation via oxydo-reductase pathway; glycine from L-threonine: step 1/2. In terms of biological role, catalyzes the NAD(+)-dependent oxidation of L-threonine to 2-amino-3-ketobutyrate. The polypeptide is L-threonine 3-dehydrogenase (Pseudoalteromonas atlantica (strain T6c / ATCC BAA-1087)).